A 196-amino-acid polypeptide reads, in one-letter code: Putative NADH dehydrogenase/NAD(P)H nitroreductase Smlt0482 (196 aa).

The protein belongs to the nitroreductase family. HadB/RutE subfamily. The cofactor is FMN.

This Stenotrophomonas maltophilia (strain K279a) protein is Putative NADH dehydrogenase/NAD(P)H nitroreductase Smlt0482.